We begin with the raw amino-acid sequence, 160 residues long: Protein-export protein SecB (160 aa).

It belongs to the SecB family. In terms of assembly, homotetramer, a dimer of dimers. One homotetramer interacts with 1 SecA dimer.

Its subcellular location is the cytoplasm. In terms of biological role, one of the proteins required for the normal export of preproteins out of the cell cytoplasm. It is a molecular chaperone that binds to a subset of precursor proteins, maintaining them in a translocation-competent state. It also specifically binds to its receptor SecA. The chain is Protein-export protein SecB from Burkholderia multivorans (strain ATCC 17616 / 249).